Reading from the N-terminus, the 420-residue chain is Mannose-1-phosphate guanylyltransferase regulatory subunit alpha (420 aa).

The interval 2–251 (LKAVILIGGP…DGIWSQIKSA (250 aa)) is substrate-binding domain. The GDP-alpha-D-mannose site is built by Glu-85 and Gln-247. Positions 273–420 (LAKHTPGGPR…SRSFTNQIIL (148 aa)) are hexapeptide repeat domain. The tract at residues 356–384 (TPNDPNPNDPRAHMDSESLFKDGKLLPAI) is C-loop.

The protein belongs to the transferase hexapeptide repeat family. As to quaternary structure, component of the GMPPA-GMPPB mannose-1-phosphate guanylyltransferase complex composed of 4 GMPPA subunits and 8 GMPPB subunits; the complex is organized into three layers, a central layer made up of 2 GMPPA dimers sandwiched between two layers each made up of 2 GMPPB dimers. As to expression, expressed in the liver (at protein level).

The protein resides in the cytoplasm. Its function is as follows. Regulatory subunit of the GMPPA-GMPPB mannose-1-phosphate guanylyltransferase complex; reduces the catalytic activity of GMPPB when part of the complex. Mediates allosteric feedback inhibition of GMPPB catalytic activity upon binding GDP-alpha-D-mannose. Together with GMPPB regulates GDP-alpha-D-mannose levels. This chain is Mannose-1-phosphate guanylyltransferase regulatory subunit alpha (GMPPA), found in Sus scrofa (Pig).